Consider the following 250-residue polypeptide: V-type proton ATPase subunit D (250 aa).

Belongs to the V-ATPase D subunit family. In terms of assembly, V-ATPase is a heteromultimeric enzyme made up of two complexes: the ATP-hydrolytic V1 complex and the proton translocation V0 complex. The V1 complex consists of three catalytic AB heterodimers that form a heterohexamer, three peripheral stalks each consisting of EG heterodimers, one central rotor including subunits D and F, and the regulatory subunits C and H. The proton translocation complex V0 consists of the proton transport subunit a, a ring of proteolipid subunits c9c'', rotary subunit d, subunits e and f, and two accessory subunits ATP6AP1/Ac45 and ATP6AP2/PRR.

Functionally, subunit of the V1 complex of vacuolar(H+)-ATPase (V-ATPase), a multisubunit enzyme composed of a peripheral complex (V1) that hydrolyzes ATP and a membrane integral complex (V0) that translocates protons. V-ATPase is responsible for acidifying and maintaining the pH of intracellular compartments and in some cell types, is targeted to the plasma membrane, where it is responsible for acidifying the extracellular environment. The chain is V-type proton ATPase subunit D (VATPD) from Suberites domuncula (Sponge).